Reading from the N-terminus, the 977-residue chain is Disks large-associated protein 3 (977 aa).

Residues 1 to 10 (MRGYHGDRGS) show a composition bias toward basic and acidic residues. Disordered stretches follow at residues 1–30 (MRGY…PAAR), 52–90 (AGLG…SSTF), 137–167 (FHTL…ESPS), 181–289 (AKSH…CLDA), 398–417 (AMGD…SPKA), and 529–582 (PGSS…SADG). Over residues 53 to 73 (GLGHLSPEGPLSLSEGPSSVG) the composition is skewed to low complexity. Ser-58 carries the phosphoserine modification. Residues 74-85 (PEGGPGGVGAGG) are compositionally biased toward gly residues. Residues 189–201 (PGKRDYNGPKAEG) are compositionally biased toward basic and acidic residues. Over residues 202-212 (RSSSGGDSYSG) the composition is skewed to low complexity. Residues 221–245 (SHHHHHHHHHHHHQSRHGKRSKSKD) are compositionally biased toward basic residues. Positions 258 to 271 (GWWSSDDNLDSDSG) are enriched in low complexity. A phosphoserine mark is found at Ser-404, Ser-407, Ser-410, and Ser-414. Residues 538–547 (APPPIPPGSQ) show a composition bias toward pro residues. Phosphoserine occurs at positions 641 and 643. Disordered regions lie at residues 739-788 (EGYP…RTSP) and 906-939 (EEKK…RQRQ). Residues 754-763 (PGPPPVPAPG) are compositionally biased toward pro residues. Basic and acidic residues-rich tracts occupy residues 767 to 777 (GRRDSWMERGS) and 925 to 939 (PVKE…RQRQ). Phosphoserine is present on residues Ser-930, Ser-933, and Ser-965.

This sequence belongs to the SAPAP family. Interacts with DLG1 and DLG4/PSD-95. Expressed in most brain regions.

It localises to the cell membrane. The protein localises to the postsynaptic density. The protein resides in the synapse. May play a role in the molecular organization of synapses and neuronal cell signaling. Could be an adapter protein linking ion channel to the subsynaptic cytoskeleton. May induce enrichment of PSD-95/SAP90 at the plasma membrane. The protein is Disks large-associated protein 3 (Dlgap3) of Rattus norvegicus (Rat).